Consider the following 139-residue polypeptide: Maximins 4/H3 type 4 (139 aa).

The first 18 residues, 1-18 (MNFKYIIAVSFLIASAYA), serve as a signal peptide directing secretion. Positions 19–43 (RSVQNDEQSLSQRDVLEEESLREIR) are excised as a propeptide. N70 is modified (asparagine amide). Positions 74-118 (TAEEHEVMKRLEAVMRDLDSLDHPEEASERETRGFNQDEIAKEKR) are excised as a propeptide. I138 is subject to Isoleucine amide.

Belongs to the bombinin family. In terms of tissue distribution, expressed by the skin glands.

It localises to the secreted. Functionally, maximin-4 shows antibacterial activity against both Gram-positive and Gram-negative bacteria. It also shows antimicrobial activity against the fungus C.albicans, but not against A.flavus nor P.uticale. It has little hemolytic activity. It does not possess a significant cytotoxicity against tumor cell lines. It does not possess a significant anti-HIV activity. In terms of biological role, maximin-H3 shows antibacterial activity against both Gram-positive and Gram-negative bacteria. It also shows antimicrobial activity against the fungus C.albicans. Shows strong hemolytic activity. This is Maximins 4/H3 type 4 from Bombina maxima (Giant fire-bellied toad).